We begin with the raw amino-acid sequence, 107 residues long: Iron-binding protein IscA (107 aa).

Cysteine 35, cysteine 99, and cysteine 101 together coordinate Fe cation.

The protein belongs to the HesB/IscA family. Homodimer; may form tetramers and higher multimers. The cofactor is Fe cation.

Its function is as follows. Is able to transfer iron-sulfur clusters to apo-ferredoxin. Multiple cycles of [2Fe2S] cluster formation and transfer are observed, suggesting that IscA acts catalytically. Recruits intracellular free iron so as to provide iron for the assembly of transient iron-sulfur cluster in IscU in the presence of IscS, L-cysteine and the thioredoxin reductase system TrxA/TrxB. This chain is Iron-binding protein IscA, found in Pectobacterium atrosepticum (strain SCRI 1043 / ATCC BAA-672) (Erwinia carotovora subsp. atroseptica).